A 156-amino-acid polypeptide reads, in one-letter code: 6,7-dimethyl-8-ribityllumazine synthase (156 aa).

5-amino-6-(D-ribitylamino)uracil-binding positions include Phe23, Ser57 to Glu59, and Ala81 to Ile83. Gly86–Thr87 provides a ligand contact to (2S)-2-hydroxy-3-oxobutyl phosphate. The active-site Proton donor is the His89. Tyr114 contributes to the 5-amino-6-(D-ribitylamino)uracil binding site. Arg128 serves as a coordination point for (2S)-2-hydroxy-3-oxobutyl phosphate.

The protein belongs to the DMRL synthase family. As to quaternary structure, forms an icosahedral capsid composed of 60 subunits, arranged as a dodecamer of pentamers.

The enzyme catalyses (2S)-2-hydroxy-3-oxobutyl phosphate + 5-amino-6-(D-ribitylamino)uracil = 6,7-dimethyl-8-(1-D-ribityl)lumazine + phosphate + 2 H2O + H(+). It participates in cofactor biosynthesis; riboflavin biosynthesis; riboflavin from 2-hydroxy-3-oxobutyl phosphate and 5-amino-6-(D-ribitylamino)uracil: step 1/2. Catalyzes the formation of 6,7-dimethyl-8-ribityllumazine by condensation of 5-amino-6-(D-ribitylamino)uracil with 3,4-dihydroxy-2-butanone 4-phosphate. This is the penultimate step in the biosynthesis of riboflavin. In Halorhodospira halophila (strain DSM 244 / SL1) (Ectothiorhodospira halophila (strain DSM 244 / SL1)), this protein is 6,7-dimethyl-8-ribityllumazine synthase.